Consider the following 739-residue polypeptide: Platelet endothelial cell adhesion molecule (739 aa).

A signal peptide spans 1–27 (MQLRWTQRGMMWLGALLTLLLCSSLKG). Residues 28 to 599 (QENSFTINSI…TVRVYLPLEK (572 aa)) lie on the Extracellular side of the membrane. Ig-like C2-type domains lie at 35–120 (NSIH…EKTT), 145–213 (GGVV…IFSG), and 236–315 (PKFH…SKVS). N52, N84, and N151 each carry an N-linked (GlcNAc...) asparagine glycan. C57 and C109 are oxidised to a cystine. Cystine bridges form between C152–C206 and C256–C304. N301, N320, N356, N371, N435, N446, N453, N550, and N578 each carry an N-linked (GlcNAc...) asparagine glycan. Ig-like C2-type domains lie at 328–403 (PKLE…VQIT), 424–493 (GQTI…EVLR), and 499–590 (PVDE…NTLT). 3 disulfides stabilise this stretch: C347/C386, C431/C476, and C522/C571. Residues 600 to 618 (GLIAVVVIGVIIVTLVLGA) form a helical membrane-spanning segment. Residues 619–739 (KCYFLKKAKA…SRTEGSLDGS (121 aa)) are Cytoplasmic-facing. C620 carries S-palmitoyl cysteine lipidation. 2 short sequence motifs (ITIM motif) span residues 687–692 (VEYTEV) and 712–717 (TVYSEI). Y689 and Y714 each carry phosphotyrosine; by FER. Residues 708-730 (TETETVYSEIRKADPDFVENRYS) are membrane-bound segment which detaches upon phosphorylation. A may play a role in cytoprotective signaling region spans residues 722–739 (PDFVENRYSRTEGSLDGS). 2 positions are modified to phosphoserine: S730 and S735.

As to quaternary structure, trans-homodimer (via Ig-like C2-type 1 and Ig-like C2-type 2 domains); trans-homodimerization is required for cell-cell interaction. Forms a complex with BDKRB2 and GNAQ. Interacts with BDKRB2 and GNAQ. Interacts with PTPN11; Tyr-714 is critical for PTPN11 recruitment. Interacts with FER. Interacts with CD177; the interaction is Ca(2+)-dependent; the interaction is direct. Post-translationally, phosphorylated on Ser and Tyr residues by src kinases after cellular activation. Upon activation, phosphorylated on Ser-730 which probably initiates the dissociation of the membrane-interaction segment (residues 708-730) from the cell membrane allowing the sequential phosphorylation of Tyr-714 and Tyr-689. Constitutively phosphorylated on Ser-735 in resting platelets. Phosphorylated on tyrosine residues by FER and FES in response to FCER1 activation. In endothelial cells Fyn mediates mechanical-force (stretch or pull) induced tyrosine phosphorylation. In terms of processing, palmitoylation by ZDHHC21 is necessary for cell surface expression in endothelial cells and enrichment in membrane rafts.

It localises to the cell membrane. The protein resides in the membrane raft. The protein localises to the cell junction. Cell adhesion molecule which is required for leukocyte transendothelial migration (TEM) under most inflammatory conditions. Tyr-689 plays a critical role in TEM and is required for efficient trafficking of PECAM1 to and from the lateral border recycling compartment (LBRC) and is also essential for the LBRC membrane to be targeted around migrating leukocytes. Trans-homophilic interaction may play a role in endothelial cell-cell adhesion via cell junctions. Heterophilic interaction with CD177 plays a role in transendothelial migration of neutrophils. Homophilic ligation of PECAM1 prevents macrophage-mediated phagocytosis of neighboring viable leukocytes by transmitting a detachment signal. Promotes macrophage-mediated phagocytosis of apoptotic leukocytes by tethering them to the phagocytic cells; PECAM1-mediated detachment signal appears to be disabled in apoptotic leukocytes. Modulates bradykinin receptor BDKRB2 activation. Regulates bradykinin- and hyperosmotic shock-induced ERK1/2 activation in endothelial cells. Induces susceptibility to atherosclerosis. In Bos taurus (Bovine), this protein is Platelet endothelial cell adhesion molecule (PECAM1).